A 461-amino-acid chain; its full sequence is Fumarate hydratase class II (461 aa).

Residues 97-99 (SGT), 127-130 (HPND), 137-139 (SSN), and T185 each bind substrate. H186 functions as the Proton donor/acceptor in the catalytic mechanism. The active site involves S316. Residues S317 and 322–324 (KVN) each bind substrate.

Belongs to the class-II fumarase/aspartase family. Fumarase subfamily. As to quaternary structure, homotetramer.

The protein localises to the cytoplasm. The enzyme catalyses (S)-malate = fumarate + H2O. It functions in the pathway carbohydrate metabolism; tricarboxylic acid cycle; (S)-malate from fumarate: step 1/1. Functionally, involved in the TCA cycle. Catalyzes the stereospecific interconversion of fumarate to L-malate. In Staphylococcus aureus (strain COL), this protein is Fumarate hydratase class II.